Reading from the N-terminus, the 57-residue chain is Granulin-3 (57 aa).

2 disulfide bridges follow: Cys4–Cys16 and Cys10–Cys26.

This sequence belongs to the granulin family. Post-translationally, granulins are disulfide bridged. As to expression, ubiquitous.

The protein localises to the secreted. Functionally, granulins have possible cytokine-like activity. They may play a role in inflammation, wound repair, and tissue remodeling. This chain is Granulin-3, found in Cyprinus carpio (Common carp).